The chain runs to 367 residues: MSKPISQIEPLPHIAATKPYVPGGKLHGAKGAVAMLASNENPFGPSPKAVEAAKAAAANVHVYPDPDYGPLRAAIAAAKGIADASRVVTSAGSDEIIHLLTQCYAGPGDEVLFTEHAFSMYRVSAGAHGATSVTVPETDMTAGVNAILGAVSPRTKILFLANPNNPTGTMLSVDELKALQDALPPHVLFVVDGAYSEYLGPDYEAQLRDLVDRRDNTVMMRTFSKIYGLAAMRLGWAYMPAGIAAIYQRIRGPFNVSSIAAAAGIACVGDEAFLKMSRDHNTHWRAIMTDALNAMGLPTPPSHANFIVTEFGSDERAAAANQHLKDNDILVRAIGGYGLPTKLRISVGSADDNQRFLDALKAFTASR.

Residue K225 is modified to N6-(pyridoxal phosphate)lysine.

Belongs to the class-II pyridoxal-phosphate-dependent aminotransferase family. Histidinol-phosphate aminotransferase subfamily. Homodimer. The cofactor is pyridoxal 5'-phosphate.

The catalysed reaction is L-histidinol phosphate + 2-oxoglutarate = 3-(imidazol-4-yl)-2-oxopropyl phosphate + L-glutamate. It participates in amino-acid biosynthesis; L-histidine biosynthesis; L-histidine from 5-phospho-alpha-D-ribose 1-diphosphate: step 7/9. The protein is Histidinol-phosphate aminotransferase of Hyphomonas neptunium (strain ATCC 15444).